We begin with the raw amino-acid sequence, 515 residues long: Methionine--tRNA ligase (515 aa).

Residues 13–23 carry the 'HIGH' region motif; the sequence is AYPNGKPHIGH. The 'KMSKS' region signature appears at 300–304; that stretch reads KMSKS. Lys-303 serves as a coordination point for ATP.

The protein belongs to the class-I aminoacyl-tRNA synthetase family. MetG type 2B subfamily. Monomer.

The protein localises to the cytoplasm. It carries out the reaction tRNA(Met) + L-methionine + ATP = L-methionyl-tRNA(Met) + AMP + diphosphate. Is required not only for elongation of protein synthesis but also for the initiation of all mRNA translation through initiator tRNA(fMet) aminoacylation. The chain is Methionine--tRNA ligase from Brucella suis biovar 1 (strain 1330).